The chain runs to 554 residues: Glucose-6-phosphate isomerase (554 aa).

The active-site Proton donor is Glu358. Active-site residues include His389 and Lys515. The segment covering 527-540 (SDGSPQRQSDSSTD) has biased composition (polar residues). The tract at residues 527–554 (SDGSPQRQSDSSTDALVRRYRTQRGRTG) is disordered. The segment covering 544–554 (RRYRTQRGRTG) has biased composition (basic residues).

The protein belongs to the GPI family.

Its subcellular location is the cytoplasm. It catalyses the reaction alpha-D-glucose 6-phosphate = beta-D-fructose 6-phosphate. Its pathway is carbohydrate biosynthesis; gluconeogenesis. It participates in carbohydrate degradation; glycolysis; D-glyceraldehyde 3-phosphate and glycerone phosphate from D-glucose: step 2/4. In terms of biological role, catalyzes the reversible isomerization of glucose-6-phosphate to fructose-6-phosphate. The protein is Glucose-6-phosphate isomerase of Mycobacterium ulcerans (strain Agy99).